The chain runs to 291 residues: Elongation factor Ts (291 aa).

The interval 79–82 (TDFV) is involved in Mg(2+) ion dislocation from EF-Tu.

This sequence belongs to the EF-Ts family.

The protein localises to the cytoplasm. In terms of biological role, associates with the EF-Tu.GDP complex and induces the exchange of GDP to GTP. It remains bound to the aminoacyl-tRNA.EF-Tu.GTP complex up to the GTP hydrolysis stage on the ribosome. The chain is Elongation factor Ts from Anaplasma marginale (strain Florida).